A 418-amino-acid polypeptide reads, in one-letter code: Serine hydroxymethyltransferase (418 aa).

Residues leucine 121 and 125-127 each bind (6S)-5,6,7,8-tetrahydrofolate; that span reads GHL. Lysine 230 is subject to N6-(pyridoxal phosphate)lysine. Position 356–358 (356–358) interacts with (6S)-5,6,7,8-tetrahydrofolate; that stretch reads SPF.

Belongs to the SHMT family. Homodimer. Requires pyridoxal 5'-phosphate as cofactor.

The protein resides in the cytoplasm. It catalyses the reaction (6R)-5,10-methylene-5,6,7,8-tetrahydrofolate + glycine + H2O = (6S)-5,6,7,8-tetrahydrofolate + L-serine. The protein operates within one-carbon metabolism; tetrahydrofolate interconversion. It functions in the pathway amino-acid biosynthesis; glycine biosynthesis; glycine from L-serine: step 1/1. Its function is as follows. Catalyzes the reversible interconversion of serine and glycine with tetrahydrofolate (THF) serving as the one-carbon carrier. This reaction serves as the major source of one-carbon groups required for the biosynthesis of purines, thymidylate, methionine, and other important biomolecules. Also exhibits THF-independent aldolase activity toward beta-hydroxyamino acids, producing glycine and aldehydes, via a retro-aldol mechanism. This chain is Serine hydroxymethyltransferase, found in Shewanella halifaxensis (strain HAW-EB4).